The primary structure comprises 99 residues: Acylphosphatase-2 (99 aa).

Ser-2 is modified (N-acetylserine). An Acylphosphatase-like domain is found at 9 to 99 (SVDYEVFGRV…LEYSNFSIRY (91 aa)). Residues Arg-24 and Asn-42 contribute to the active site. A Phosphoserine modification is found at Ser-93.

Belongs to the acylphosphatase family.

It carries out the reaction an acyl phosphate + H2O = a carboxylate + phosphate + H(+). Functionally, its physiological role is not yet clear. In Homo sapiens (Human), this protein is Acylphosphatase-2 (ACYP2).